A 390-amino-acid chain; its full sequence is tRNA(Met) cytidine acetate ligase (390 aa).

Residues 7 to 20 (VVEY…HKLH), Gly-101, Asn-162, and Arg-187 contribute to the ATP site.

Belongs to the TmcAL family.

The protein resides in the cytoplasm. It catalyses the reaction cytidine(34) in elongator tRNA(Met) + acetate + ATP = N(4)-acetylcytidine(34) in elongator tRNA(Met) + AMP + diphosphate. Its function is as follows. Catalyzes the formation of N(4)-acetylcytidine (ac(4)C) at the wobble position of elongator tRNA(Met), using acetate and ATP as substrates. First activates an acetate ion to form acetyladenylate (Ac-AMP) and then transfers the acetyl group to tRNA to form ac(4)C34. The sequence is that of tRNA(Met) cytidine acetate ligase from Listeria monocytogenes serotype 4b (strain CLIP80459).